The sequence spans 492 residues: Probable glycine dehydrogenase (decarboxylating) subunit 2 (492 aa).

K274 carries the N6-(pyridoxal phosphate)lysine modification.

It belongs to the GcvP family. C-terminal subunit subfamily. In terms of assembly, the glycine cleavage system is composed of four proteins: P, T, L and H. In this organism, the P 'protein' is a heterodimer of two subunits. It depends on pyridoxal 5'-phosphate as a cofactor.

It carries out the reaction N(6)-[(R)-lipoyl]-L-lysyl-[glycine-cleavage complex H protein] + glycine + H(+) = N(6)-[(R)-S(8)-aminomethyldihydrolipoyl]-L-lysyl-[glycine-cleavage complex H protein] + CO2. Its function is as follows. The glycine cleavage system catalyzes the degradation of glycine. The P protein binds the alpha-amino group of glycine through its pyridoxal phosphate cofactor; CO(2) is released and the remaining methylamine moiety is then transferred to the lipoamide cofactor of the H protein. The sequence is that of Probable glycine dehydrogenase (decarboxylating) subunit 2 from Staphylococcus saprophyticus subsp. saprophyticus (strain ATCC 15305 / DSM 20229 / NCIMB 8711 / NCTC 7292 / S-41).